Here is a 262-residue protein sequence, read N- to C-terminus: MLPQDTNTDPLPGDDAESASGKSADASQGTPNPGDEVAHPRRIRSFVRRAGRTSTGQQRAMDELGPTYIVPYQPEPLDWTATFGREAPSILEIGFGMGETTAHIAGLRSQDNFLGCEVHEPGVGALLKLIGERGLQNVRIMQHDAVEVAAHMLTENSLDGVHIYFPDPWHKKRHNKRRLVQPPLVKLLASRLKPGGYIHCATDWEEYAHQMVEVLSGEPALENTSKADGGFAERPDYRPVTKFEKRGLRLGHGVWDVVFRKK.

Residues Met-1–Gln-58 are disordered. The span at Pro-40 to Gly-51 shows a compositional bias: basic residues. S-adenosyl-L-methionine contacts are provided by Glu-92, Glu-117, Asp-144, and Asp-167. The active site involves Asp-167. Lys-171 is a substrate binding site. Positions Arg-173–Arg-178 are interaction with RNA. Substrate contacts are provided by residues Asp-203 and Thr-241–Glu-244.

This sequence belongs to the class I-like SAM-binding methyltransferase superfamily. TrmB family.

The catalysed reaction is guanosine(46) in tRNA + S-adenosyl-L-methionine = N(7)-methylguanosine(46) in tRNA + S-adenosyl-L-homocysteine. The protein operates within tRNA modification; N(7)-methylguanine-tRNA biosynthesis. Catalyzes the formation of N(7)-methylguanine at position 46 (m7G46) in tRNA. In Cupriavidus metallidurans (strain ATCC 43123 / DSM 2839 / NBRC 102507 / CH34) (Ralstonia metallidurans), this protein is tRNA (guanine-N(7)-)-methyltransferase.